The sequence spans 1820 residues: Afadin (1820 aa).

Residues 39 to 133 (FHGVMRFYFQ…GRFVLKNEND (95 aa)) enclose the Ras-associating 1 domain. The tract at residues 129–196 (KNENDAIPAK…PSQGDDSENS (68 aa)) is disordered. Residues 146 to 186 (EKQEKEGVIQNFKRTLSKKEKKEKKKKEKEALRQASDKEER) adopt a coiled-coil conformation. Residues 160-172 (TLSKKEKKEKKKK) show a composition bias toward basic residues. Basic and acidic residues predominate over residues 173-189 (EKEALRQASDKEERPSQ). A phosphoserine mark is found at S216, S246, and S256. In terms of domain architecture, Ras-associating 2 spans 246–348 (SGGTLRIYAD…LVFQLKRRPP (103 aa)). Basic and acidic residues predominate over residues 356 to 371 (KKHVEGKSLKGKDRAD). A disordered region spans residues 356-377 (KKHVEGKSLKGKDRADGSGYGS). S391 and S424 each carry phosphoserine. The 67-residue stretch at 426-492 (TEVGTEKFDD…LQSGMRLQFG (67 aa)) folds into the FHA domain. Residues S512, S557, S562, S655, S1083, S1107, S1126, S1140, S1143, S1172, S1173, S1182, and S1199 each carry the phosphoserine modification. Residues 538 to 569 (GDVHSGTALPASRSTTRLDSDRVSSASSTAER) form a disordered region. Residues 653–908 (DISPTERTHK…IENVVAVAEN (256 aa)) form the Dilute domain. The 87-residue stretch at 1007 to 1093 (IITVTLKKQN…VVTLEVAKQG (87 aa)) folds into the PDZ domain. Residues 1107–1194 (SPMMQRISDR…GKGPYTSGTA (88 aa)) are disordered. Residues 1113 to 1128 (ISDRRGSGKPRPKSEG) show a composition bias toward basic and acidic residues. Positions 1132-1143 (YNNSAQNGSPES) are enriched in polar residues. The span at 1152–1172 (SEPKKLPGDDRLMKNRADHRS) shows a compositional bias: basic and acidic residues. The tract at residues 1203–1222 (GNLCTEEQSPPPRPEAYPIP) is disordered. T1232 is modified (phosphothreonine). Disordered stretches follow at residues 1235-1278 (ASKS…SQEE), 1308-1527 (QSSS…KQQQ), and 1567-1716 (RLQE…LKTQ). A Phosphoserine modification is found at S1238. The span at 1252–1262 (YEEKPHVHTES) shows a compositional bias: basic and acidic residues. S1275 is subject to Phosphoserine. The span at 1309-1318 (SSSVESSTSS) shows a compositional bias: low complexity. Polar residues predominate over residues 1325–1337 (SSKSVTPASTLTK). S1328 carries the post-translational modification Phosphoserine. T1330 carries the post-translational modification Phosphothreonine. Residues 1364–1373 (LPPPPPPPPV) are compositionally biased toward pro residues. The span at 1407–1440 (EWKKREEHQRWYEKEKARLEEERERKRREQERKL) shows a compositional bias: basic and acidic residues. The stretch at 1410-1446 (KREEHQRWYEKEKARLEEERERKRREQERKLGQMRSQ) forms a coiled coil. Polar residues predominate over residues 1443–1457 (MRSQTLNPASFSPLA). Positions 1487–1503 (TIERKDLQYITISKEEL) are enriched in basic and acidic residues. Residues S1499 and S1510 each carry the phosphoserine modification. A compositionally biased stretch (basic and acidic residues) spans 1513-1526 (PWKRDAREKLEKQQ). The stretch at 1523–1561 (EKQQQMHIVDMLSKEIHELQNKVDRTAEESDRLRKLMLE) forms a coiled coil. A compositionally biased stretch (acidic residues) spans 1576–1587 (EDDDEEEDDDVD). The stretch at 1593 to 1665 (QRLEAERRAR…SRLEAERRRQ (73 aa)) forms a coiled coil. Residues 1595–1675 (LEAERRARMQ…HEEAARRLLE (81 aa)) are compositionally biased toward basic and acidic residues. 4 positions are modified to phosphoserine: S1694, S1719, S1770, and S1795. The disordered stretch occupies residues 1734 to 1820 (EEEDYGPAGP…TELENELNTK (87 aa)). The segment covering 1759–1772 (APREAREKLTRSQD) has biased composition (basic and acidic residues). Over residues 1800-1820 (VSDKVKASRKLTELENELNTK) the composition is skewed to basic and acidic residues. Position 1803 is an N6-acetyllysine (K1803).

Homodimer. Interacts with F-actin, nectin and NECTIN3. Essential for the association of nectin and E-cadherin. Isoform 2/s-afadin does not interact with F-actin. Interacts with ZO-1 and occludin, but probably in an indirect manner. Interacts with RIT1, RIT2, NRXN1 and BCR. Interacts with ADAM10; the interaction locks ADAM10 at adherens junctions following ADAM10 recruitment to adherens junctions by TSPAN33. Isoform 1 is expressed only in a restricted set of epithelial structures during early embryogenesis.

The protein localises to the cell junction. Its subcellular location is the adherens junction. Belongs to an adhesion system, probably together with the E-cadherin-catenin system, which plays a role in the organization of homotypic, interneuronal and heterotypic cell-cell adherens junctions (AJs). Nectin- and actin-filament-binding protein that connects nectin to the actin cytoskeleton. May play a key role in the organization of epithelial structures of the embryonic ectoderm. Essential for the organization of adherens junctions. In Mus musculus (Mouse), this protein is Afadin.